The following is a 542-amino-acid chain: MTVMEHTKAASIDLTKHGLRNVKEVVRNPSYEMLFAEETRADLEGYEKGVVTELGAVAVDTGIFTGRSPKDKYIVKDATTEEHMWWTTPAVPNDNKPITQEVWNDLKQLVTNQLSGKRVFVIDGYCGANPDTRLSIRVITEVAWQAHFVKNMFIRPTEEELASFEPDFVVMNGAKCTNQKWKEHGLNSENFTVFNLTERMQLIGGTWYGGEMKKGMFAMMNYFLPLKGIASMHCSANMGKEGDVAIFFGLSGTGKTTLSTDPKRALIGDDEHGWDDDGVFNFEGGCYAKTIKLSKEAEPDIYNAIRRDALLENVTVRNDGSINFDDGSKTENTRVSYPIHHIENIVKPVSKGGHANKVIFLSADAFGVLPPVSKLTPEQTKYHFLSGFTAKLAGTERGITEPTPTFSACFGAAFLTLHPTKYAEVLVKRMEEAGAEAYLVNTGWNGSGKRISIQDTRGIIDAILDGSIEEAPTKHVPIFNLEVPTSLPGVDPTILDPRDTYVDPLQWESKAQDLAQRFINNFAKYTDNAEGQSLVAAGPQLD.

Substrate is bound by residues Arg67, Tyr208, and Lys214. Residues Lys214, His233, and 249-257 (GLSGTGKTT) each bind ATP. Residues Lys214 and His233 each contribute to the Mn(2+) site. Position 270 (Asp270) interacts with Mn(2+). ATP contacts are provided by residues Glu298, Arg334, 450 to 451 (RI), and Thr456. Position 334 (Arg334) interacts with substrate.

Belongs to the phosphoenolpyruvate carboxykinase (ATP) family. In terms of assembly, monomer. It depends on Mn(2+) as a cofactor.

It localises to the cytoplasm. It carries out the reaction oxaloacetate + ATP = phosphoenolpyruvate + ADP + CO2. It functions in the pathway carbohydrate biosynthesis; gluconeogenesis. Functionally, involved in the gluconeogenesis. Catalyzes the conversion of oxaloacetate (OAA) to phosphoenolpyruvate (PEP) through direct phosphoryl transfer between the nucleoside triphosphate and OAA. The chain is Phosphoenolpyruvate carboxykinase (ATP) from Vibrio vulnificus (strain CMCP6).